Consider the following 240-residue polypeptide: Fatty acid metabolism regulator protein (240 aa).

In terms of domain architecture, HTH gntR-type spans 6 to 74 (KGPASFAEKY…HGKPTRVNNF (69 aa)). The H-T-H motif DNA-binding region spans 34–53 (ERELSELIGVTRTTLREVLQ).

As to quaternary structure, homodimer.

The protein resides in the cytoplasm. Functionally, multifunctional regulator of fatty acid metabolism. The sequence is that of Fatty acid metabolism regulator protein from Shewanella oneidensis (strain ATCC 700550 / JCM 31522 / CIP 106686 / LMG 19005 / NCIMB 14063 / MR-1).